Consider the following 279-residue polypeptide: D-aminoacyl-tRNA deacylase (279 aa).

Residues 81-100 (GRKSLTVHHPGNPTEDNSLG) are disordered.

This sequence belongs to the DtdA deacylase family. As to quaternary structure, monomer. Zn(2+) is required as a cofactor.

The catalysed reaction is a D-aminoacyl-tRNA + H2O = a tRNA + a D-alpha-amino acid + H(+). The enzyme catalyses glycyl-tRNA(Ala) + H2O = tRNA(Ala) + glycine + H(+). D-aminoacyl-tRNA deacylase with broad substrate specificity. By recycling D-aminoacyl-tRNA to D-amino acids and free tRNA molecules, this enzyme counteracts the toxicity associated with the formation of D-aminoacyl-tRNA entities in vivo. This is D-aminoacyl-tRNA deacylase from Aeropyrum pernix (strain ATCC 700893 / DSM 11879 / JCM 9820 / NBRC 100138 / K1).